The following is a 243-amino-acid chain: Tryptophan synthase alpha chain (243 aa).

Active-site proton acceptor residues include glutamate 31 and aspartate 42.

This sequence belongs to the TrpA family. As to quaternary structure, tetramer of two alpha and two beta chains.

It carries out the reaction (1S,2R)-1-C-(indol-3-yl)glycerol 3-phosphate + L-serine = D-glyceraldehyde 3-phosphate + L-tryptophan + H2O. It functions in the pathway amino-acid biosynthesis; L-tryptophan biosynthesis; L-tryptophan from chorismate: step 5/5. Its function is as follows. The alpha subunit is responsible for the aldol cleavage of indoleglycerol phosphate to indole and glyceraldehyde 3-phosphate. The sequence is that of Tryptophan synthase alpha chain from Staphylococcus haemolyticus (strain JCSC1435).